Here is a 492-residue protein sequence, read N- to C-terminus: Glutamyl-tRNA(Gln) amidotransferase subunit A (492 aa).

Residues Lys79 and Ser154 each act as charge relay system in the active site. Ser178 serves as the catalytic Acyl-ester intermediate.

Belongs to the amidase family. GatA subfamily. In terms of assembly, heterotrimer of A, B and C subunits.

It carries out the reaction L-glutamyl-tRNA(Gln) + L-glutamine + ATP + H2O = L-glutaminyl-tRNA(Gln) + L-glutamate + ADP + phosphate + H(+). In terms of biological role, allows the formation of correctly charged Gln-tRNA(Gln) through the transamidation of misacylated Glu-tRNA(Gln) in organisms which lack glutaminyl-tRNA synthetase. The reaction takes place in the presence of glutamine and ATP through an activated gamma-phospho-Glu-tRNA(Gln). This Acinetobacter baumannii (strain ACICU) protein is Glutamyl-tRNA(Gln) amidotransferase subunit A.